Consider the following 664-residue polypeptide: Protein cueball (664 aa).

A signal peptide spans 1–21 (MRNLGIAVTFAVLLVIGYVTA). Topologically, residues 22–552 (LEWDAVVTTD…VTYCKNSFNR (531 aa)) are extracellular. Residues asparagine 40, asparagine 140, and asparagine 188 are each glycosylated (N-linked (GlcNAc...) asparagine). 3 LDL-receptor class B repeats span residues 115–157 (RKLY…ENHD), 168–211 (RHLY…DHYN), and 212–257 (NRIY…NSQY). 3 EGF-like domains span residues 367 to 399 (EIPICNNFCVHGECVVGADSRPMCKCHAEFEGE), 402 to 438 (DRNICDGYCLNNGRCALSATGQRSCTCSKNFSGARCE), and 473 to 510 (EEYTCNNYCLHDGTCILNNDTMLVECRCGSEYTGKRCE). Cystine bridges form between cysteine 371/cysteine 380, cysteine 375/cysteine 390, cysteine 406/cysteine 416, cysteine 410/cysteine 426, cysteine 428/cysteine 437, cysteine 477/cysteine 487, cysteine 481/cysteine 498, and cysteine 500/cysteine 509. Asparagine 431 carries an N-linked (GlcNAc...) asparagine glycan. Asparagine 491 carries N-linked (GlcNAc...) asparagine glycosylation. The N-linked (GlcNAc...) asparagine glycan is linked to asparagine 551. A helical membrane pass occupies residues 553-573 (TVVYVSLAFTASLVTLVTILC). Topologically, residues 574-664 (TVRRMYERNR…KLPSCVAEKN (91 aa)) are cytoplasmic.

This sequence belongs to the cueball family.

It is found in the cell membrane. Functionally, has a role in spermatogenesis and oogenesis. This Aedes aegypti (Yellowfever mosquito) protein is Protein cueball.